The following is an 89-amino-acid chain: Small ribosomal subunit protein uS15 (89 aa).

It belongs to the universal ribosomal protein uS15 family. Part of the 30S ribosomal subunit. Forms a bridge to the 50S subunit in the 70S ribosome, contacting the 23S rRNA.

One of the primary rRNA binding proteins, it binds directly to 16S rRNA where it helps nucleate assembly of the platform of the 30S subunit by binding and bridging several RNA helices of the 16S rRNA. Its function is as follows. Forms an intersubunit bridge (bridge B4) with the 23S rRNA of the 50S subunit in the ribosome. This Renibacterium salmoninarum (strain ATCC 33209 / DSM 20767 / JCM 11484 / NBRC 15589 / NCIMB 2235) protein is Small ribosomal subunit protein uS15.